The sequence spans 445 residues: NADH-quinone oxidoreductase subunit F (445 aa).

61–70 (GRGGAGFATG) contacts NAD(+). 177–224 (GAGAYICGEETALLDSLEGRRGQPRLRPPFPAVAGLYGCPTVINNVET) contributes to the FMN binding site. 4 residues coordinate [4Fe-4S] cluster: C353, C356, C359, and C399.

The protein belongs to the complex I 51 kDa subunit family. It depends on FMN as a cofactor. [4Fe-4S] cluster serves as cofactor.

It catalyses the reaction a quinone + NADH + 5 H(+)(in) = a quinol + NAD(+) + 4 H(+)(out). Functionally, NDH-1 shuttles electrons from NADH, via FMN and iron-sulfur (Fe-S) centers, to quinones in the respiratory chain. The immediate electron acceptor for the enzyme in this species is believed to be menaquinone. Couples the redox reaction to proton translocation (for every two electrons transferred, four hydrogen ions are translocated across the cytoplasmic membrane), and thus conserves the redox energy in a proton gradient. This is NADH-quinone oxidoreductase subunit F (nuoF) from Mycobacterium bovis (strain ATCC BAA-935 / AF2122/97).